The chain runs to 1127 residues: Caprin-2 (1127 aa).

The interval 67 to 108 (YQSPSGHSEEEREGNMKSAKPQVNHSQHGESQRALSPLQSTL) is disordered. The span at 99–108 (RALSPLQSTL) shows a compositional bias: polar residues. Coiled coils occupy residues 129–156 (LKHK…GEHL) and 194–216 (AQKK…KLRT). Disordered regions lie at residues 382-614 (NKQG…KDPV), 642-753 (DKPS…SSSV), and 922-975 (QCYK…PVDV). Composition is skewed to basic and acidic residues over residues 402–432 (KRWD…HQEV) and 440–464 (EQRK…EISK). Polar residues-rich tracts occupy residues 512-531 (PKSW…SWTT) and 544-567 (TPKS…QISP). Basic and acidic residues predominate over residues 588–597 (LNTEPKDVPK). Polar residues-rich tracts occupy residues 665–714 (KEQN…TSET) and 741–753 (QGFQ…SSSV). Residues Ser-948 and Ser-949 each carry the phosphoserine modification. A compositionally biased stretch (polar residues) spans 956 to 970 (TFNSGDSGQGDSRSM). In terms of domain architecture, C1q spans 993 to 1127 (PQQMRVAFSA…TFSGYLLYQD (135 aa)). Residues Asp-1078 and Glu-1084 each coordinate Ca(2+).

The protein belongs to the caprin family. Homotrimer; via C1q domain. Found in a complex with LRP6, CCNY and CDK14 during G2/M stage; CAPRIN2 functions as a scaffold for the complex by binding to CCNY via its N terminus and to CDK14 via its C terminus. Interacts with LRP5. Interacts with LRP6. In terms of tissue distribution, detected in all tissues tested with highest levels of expression in brain and spleen.

It is found in the cytoplasm. The protein localises to the mitochondrion. Its subcellular location is the cell membrane. Its function is as follows. Promotes phosphorylation of the Wnt coreceptor LRP6, leading to increased activity of the canonical Wnt signaling pathway. Facilitates constitutive LRP6 phosphorylation by CDK14/CCNY during G2/M stage of the cell cycle, which may potentiate cells for Wnt signaling. May regulate the transport and translation of mRNAs, modulating for instance the expression of proteins involved in synaptic plasticity in neurons. Involved in regulation of growth as erythroblasts shift from a highly proliferative state towards their terminal phase of differentiation. May be involved in apoptosis. The protein is Caprin-2 of Homo sapiens (Human).